Here is a 595-residue protein sequence, read N- to C-terminus: NADPH-dependent diflavin oxidoreductase 1 (595 aa).

The 145-residue stretch at 6 to 150 folds into the Flavodoxin-like domain; sequence VLVLYGSQTG…VIDPWLLSFW (145 aa). FMN contacts are provided by residues 12–17, 59–62, 97–106, and D132; these read SQTGTA, ATTG, and LGDSSYPKFN. An FAD-binding FR-type domain is found at 204–444; the sequence is LRPFPAPLVF…WVKKGSLKFP (241 aa). FAD is bound by residues R348, 380–383, and 414–417; these read RSFS and GLCS. NADP(+)-binding positions include T458, 513 to 514, and 519 to 523; these read SR and KVYVQ. FAD is bound at residue W594.

The protein belongs to the NADPH-dependent diflavin oxidoreductase NDOR1 family. In the N-terminal section; belongs to the flavodoxin family. It in the C-terminal section; belongs to the flavoprotein pyridine nucleotide cytochrome reductase family. In terms of assembly, interacts with ciapin1; as part of the cytosolic iron-sulfur (Fe-S) protein assembly (CIA) machinery. The cofactor is FAD. It depends on FMN as a cofactor.

It is found in the cytoplasm. The protein localises to the perinuclear region. The catalysed reaction is 2 oxidized [2Fe-2S]-[protein] + NADPH = 2 reduced [2Fe-2S]-[protein] + NADP(+) + H(+). NADPH-dependent reductase which is a central component of the cytosolic iron-sulfur (Fe-S) protein assembly (CIA) machinery. Transfers electrons from NADPH via its FAD and FMN prosthetic groups to the [2Fe-2S] cluster of ciapin1, another key component of the CIA machinery. In turn, this reduced cluster provides electrons for assembly of cytosolic iron-sulfur cluster proteins. It can also reduce the [2Fe-2S] cluster of cisd1 and activate this protein implicated in Fe/S cluster repair. This is NADPH-dependent diflavin oxidoreductase 1 from Danio rerio (Zebrafish).